Here is a 228-residue protein sequence, read N- to C-terminus: Ephrin-A5b (228 aa).

The first 20 residues, 1-20, serve as a signal peptide directing secretion; sequence MLQAEMIVFVGVILWMCVFS. Residues 29–162 enclose the Ephrin RBD domain; sequence ADRYAVFWNR…KLKVFVRPPN (134 aa). Asn37 carries N-linked (GlcNAc...) asparagine glycosylation. 2 cysteine pairs are disulfide-bonded: Cys62–Cys102 and Cys90–Cys151. The segment covering 184–198 has biased composition (basic and acidic residues); it reads LEPRDDTSHEAEPSR. The segment at 184–205 is disordered; that stretch reads LEPRDDTSHEAEPSRSDVSTSG. Ser204 is lipidated: GPI-anchor amidated serine. Residues 205-228 constitute a propeptide, removed in mature form; it reads GLRHQTSRPLLALLLLCISLYLLL.

This sequence belongs to the ephrin family. Widespread expression in the embryo.

It is found in the cell membrane. In terms of biological role, cell surface GPI-bound ligand for Eph receptors, a family of receptor tyrosine kinases which are crucial for migration, repulsion and adhesion during neuronal, vascular and epithelial development. Binds promiscuously Eph receptors residing on adjacent cells, leading to contact-dependent bidirectional signaling into neighboring cells. Induces compartmentalized signaling within a caveolae-like membrane microdomain when bound to the extracellular domain of its cognate receptor. This signaling event requires the activity of the Fyn tyrosine kinase. Activates the epha3 receptor to regulate cell-cell adhesion and cytoskeletal organization. With the receptor epha2 may regulate lens fiber cells shape and interactions and be important for lens transparency maintenance. May function actively to stimulate axon fasciculation. Controls axon growth and may be involved in the creation of the retino-tectal map. The polypeptide is Ephrin-A5b (efna5b) (Danio rerio (Zebrafish)).